Consider the following 482-residue polypeptide: Programmed cell death protein 7 (482 aa).

Disordered stretches follow at residues 1 to 136 (MALP…GDAA) and 151 to 170 (GNPR…GPSL). A compositionally biased stretch (pro residues) spans 13 to 48 (GPPPPQPPPSAPFGCPPPPLPSPAFPPPLPQRPGPF). A compositionally biased stretch (low complexity) spans 49 to 71 (PGASAPFLQPPLALQPRAPAEAS). Pro residues-rich tracts occupy residues 82 to 100 (PVPP…PFPG) and 109 to 130 (PPPP…PPPD). Low complexity predominate over residues 151–168 (GNPRRPGGLRTPRTPAGP). A coiled-coil region spans residues 233-408 (EARRRLERVR…LQKREIESKL (176 aa)).

As to quaternary structure, interacts with RBM40. Component of the U11/U12 snRNPs that are part of the U12-type spliceosome. Highly expressed in testis, thymus and lymph nodes. Detected at low levels in embryonic stem cells.

The protein localises to the nucleus. Functionally, promotes apoptosis when overexpressed. The chain is Programmed cell death protein 7 (Pdcd7) from Mus musculus (Mouse).